A 441-amino-acid polypeptide reads, in one-letter code: Keratin, type I cytoskeletal 17 (441 aa).

A disordered region spans residues 1 to 23 (MTTTIRHFSSGSIKGSSGLAGGS). The tract at residues 1-91 (MTTTIRHFSS…GGVDGLLVGG (91 aa)) is head. Positions 9 to 23 (SSGSIKGSSGLAGGS) are enriched in low complexity. Ser12 carries the phosphoserine modification. Residue Lys14 forms a Glycyl lysine isopeptide (Lys-Gly) (interchain with G-Cter in SUMO1); alternate linkage. Residue Lys14 forms a Glycyl lysine isopeptide (Lys-Gly) (interchain with G-Cter in SUMO2); alternate linkage. Residues Ser24, Ser30, Ser32, and Ser37 each carry the phosphoserine modification. Residue Ser42 is modified to Phosphoserine; by RPS6KA1. The interval 92 to 128 (EKATMQNLNDRLASYLDKVRALEEANTELELKIRDWY) is coil 1A. In terms of domain architecture, IF rod spans 92-403 (EKATMQNLND…RLLEGEDAHL (312 aa)). Position 118 is a phosphothreonine (Thr118). Positions 129-146 (QKQAPGPAPDYSSYFKTI) are linker 1. A coil 1B region spans residues 147-238 (EDLRNKIHTA…NHEEEMKALR (92 aa)). Positions 239–258 (GQVGGEINVEMDAAPGVDLS) are linker 12. A coil 2 region spans residues 259 to 400 (RILNEMRDQY…TYRRLLEGED (142 aa)). Lys286 participates in a covalent cross-link: Glycyl lysine isopeptide (Lys-Gly) (interchain with G-Cter in SUMO2). Phosphothreonine is present on Thr287. Ser331 bears the Phosphoserine mark. A tail region spans residues 401–441 (AHLTQYKTKEPVTTRQVRTIVEEVQDGRVISSREQVHQTSH). Glycyl lysine isopeptide (Lys-Gly) (interchain with G-Cter in SUMO1); alternate cross-links involve residues Lys407 and Lys409. Residues Lys407 and Lys409 each participate in a glycyl lysine isopeptide (Lys-Gly) (interchain with G-Cter in SUMO2); alternate cross-link.

It belongs to the intermediate filament family. In terms of assembly, heterodimer of a type I and a type II keratin. KRT17 associates with KRT6 isomers (KRT6A or KRT6B). Interacts with TRADD and SFN. Phosphorylation at Ser-42 occurs in a growth- and stress-dependent fashion in skin keratinocytes, it has no effect on filament organization.

The protein resides in the cytoplasm. In terms of biological role, type I keratin involved in the formation and maintenance of various skin appendages, specifically in determining shape and orientation of hair. Required for the correct growth of hair follicles, in particular for the persistence of the anagen (growth) state. Modulates the function of TNF-alpha in the specific context of hair cycling. Regulates protein synthesis and epithelial cell growth through binding to the adapter protein SFN and by stimulating Akt/mTOR pathway. Involved in tissue repair. May be a marker of basal cell differentiation in complex epithelia and therefore indicative of a certain type of epithelial 'stem cells'. Acts as a promoter of epithelial proliferation by acting a regulator of immune response in skin: promotes Th1/Th17-dominated immune environment contributing to the development of basaloid skin tumors. May act as an autoantigen in the immunopathogenesis of psoriasis, with certain peptide regions being a major target for autoreactive T-cells and hence causing their proliferation. The protein is Keratin, type I cytoskeletal 17 of Bos taurus (Bovine).